A 366-amino-acid chain; its full sequence is Phosphate acyltransferase (366 aa).

Residues 334 to 366 (ESAKNKETQSKQASTKNTAPKTSETTKESQQSL) form a disordered region. Residues 343 to 366 (SKQASTKNTAPKTSETTKESQQSL) are compositionally biased toward polar residues.

Belongs to the PlsX family. As to quaternary structure, homodimer. Probably interacts with PlsY.

Its subcellular location is the cytoplasm. It catalyses the reaction a fatty acyl-[ACP] + phosphate = an acyl phosphate + holo-[ACP]. Its pathway is lipid metabolism; phospholipid metabolism. Catalyzes the reversible formation of acyl-phosphate (acyl-PO(4)) from acyl-[acyl-carrier-protein] (acyl-ACP). This enzyme utilizes acyl-ACP as fatty acyl donor, but not acyl-CoA. The chain is Phosphate acyltransferase from Onion yellows phytoplasma (strain OY-M).